The chain runs to 282 residues: Endochitinase 4 (282 aa).

A GH18 domain is found at 1-282 (GAKNGVHPPL…TWSINWDGSK (282 aa)). The active-site Proton donor is Glu112. The N-linked (GlcNAc...) asparagine glycan is linked to Asn265.

It belongs to the glycosyl hydrolase 18 family. Chitinase class V subfamily.

The protein localises to the secreted. The enzyme catalyses Random endo-hydrolysis of N-acetyl-beta-D-glucosaminide (1-&gt;4)-beta-linkages in chitin and chitodextrins.. Secreted chitinase involved in the degradation of chitin, a component of the cell walls of fungi and exoskeletal elements of some animals (including worms and arthropods). Participates in the infection process and directly acts in the penetration process of the host cuticle. The chain is Endochitinase 4 (chi4) from Metarhizium anisopliae (Entomophthora anisopliae).